We begin with the raw amino-acid sequence, 112 residues long: MTSIRAVFIFLWLQLDLVNGENVEQHPSTLSVQEGDSAVIKCTYSDSASNYFPWYKQELGKGPQLIIDIRSNVGEKKDQRIAVTLNKTAKHFSLHITETQPEDSAVYFCAAS.

Positions 1 to 20 are cleaved as a signal peptide; it reads MTSIRAVFIFLWLQLDLVNG. One can recognise an Ig-like domain in the interval 21–112; it reads ENVEQHPSTL…DSAVYFCAAS (92 aa). Cys-42 and Cys-109 are joined by a disulfide. A glycan (N-linked (GlcNAc...) asparagine) is linked at Asn-86.

In terms of assembly, alpha-beta TR is a heterodimer composed of an alpha and beta chain; disulfide-linked. The alpha-beta TR is associated with the transmembrane signaling CD3 coreceptor proteins to form the TR-CD3 (TcR or TCR). The assembly of alpha-beta TR heterodimers with CD3 occurs in the endoplasmic reticulum where a single alpha-beta TR heterodimer associates with one CD3D-CD3E heterodimer, one CD3G-CD3E heterodimer and one CD247 homodimer forming a stable octameric structure. CD3D-CD3E and CD3G-CD3E heterodimers preferentially associate with TR alpha and TR beta chains, respectively. The association of the CD247 homodimer is the last step of TcR assembly in the endoplasmic reticulum and is required for transport to the cell surface.

Its subcellular location is the cell membrane. Its function is as follows. V region of the variable domain of T cell receptor (TR) alpha chain that participates in the antigen recognition. Alpha-beta T cell receptors are antigen specific receptors which are essential to the immune response and are present on the cell surface of T lymphocytes. Recognize peptide-major histocompatibility (MH) (pMH) complexes that are displayed by antigen presenting cells (APC), a prerequisite for efficient T cell adaptive immunity against pathogens. Binding of alpha-beta TR to pMH complex initiates TR-CD3 clustering on the cell surface and intracellular activation of LCK that phosphorylates the ITAM motifs of CD3G, CD3D, CD3E and CD247 enabling the recruitment of ZAP70. In turn ZAP70 phosphorylates LAT, which recruits numerous signaling molecules to form the LAT signalosome. The LAT signalosome propagates signal branching to three major signaling pathways, the calcium, the mitogen-activated protein kinase (MAPK) kinase and the nuclear factor NF-kappa-B (NF-kB) pathways, leading to the mobilization of transcription factors that are critical for gene expression and essential for T cell growth and differentiation. The T cell repertoire is generated in the thymus, by V-(D)-J rearrangement. This repertoire is then shaped by intrathymic selection events to generate a peripheral T cell pool of self-MH restricted, non-autoaggressive T cells. Post-thymic interaction of alpha-beta TR with the pMH complexes shapes TR structural and functional avidity. The polypeptide is T cell receptor alpha variable 13-1 (Homo sapiens (Human)).